The following is a 220-amino-acid chain: Cysteine-rich venom protein VAR5 (220 aa).

An N-terminal signal peptide occupies residues Met-1–Ser-22. The SCP domain maps to Asn-41–Tyr-169. 5 disulfide bridges follow: Cys-77-Cys-156, Cys-95-Cys-170, Cys-151-Cys-167, Cys-189-Cys-196, and Cys-192-Cys-201. The 16-residue stretch at Cys-205 to Gln-220 folds into the ShKT domain.

It belongs to the CRISP family. Post-translationally, contains 8 disulfide bonds. As to expression, expressed by the venom gland.

Its subcellular location is the secreted. Blocks ryanodine receptors, and potassium channels. This is Cysteine-rich venom protein VAR5 from Varanus acanthurus (Ridge-tailed monitor).